Here is an 84-residue protein sequence, read N- to C-terminus: Delta-conotoxin-like MVIA (84 aa).

The first 22 residues, 1–22 (MKLTCVMIVAVLFLTTWTFVTA), serve as a signal peptide directing secretion. A propeptide spanning residues 23 to 49 (DDSRYGLKNLFPKARHEMKNPEASKLN) is cleaved from the precursor. 3 disulfide bridges follow: Cys54-Cys69, Cys61-Cys73, and Cys68-Cys77. Residue Pro65 is modified to 4-hydroxyproline. A Serine amide modification is found at Ser83.

It belongs to the conotoxin O1 superfamily. In terms of tissue distribution, expressed by the venom duct.

Its subcellular location is the secreted. Delta-conotoxins bind to site 6 of voltage-gated sodium channels (Nav) and inhibit the inactivation process. This Conus magus (Magical cone) protein is Delta-conotoxin-like MVIA.